The primary structure comprises 132 residues: Small ribosomal subunit protein uS8 (132 aa).

Belongs to the universal ribosomal protein uS8 family. As to quaternary structure, part of the 30S ribosomal subunit. Contacts proteins S5 and S12.

Its function is as follows. One of the primary rRNA binding proteins, it binds directly to 16S rRNA central domain where it helps coordinate assembly of the platform of the 30S subunit. The polypeptide is Small ribosomal subunit protein uS8 (Geobacter metallireducens (strain ATCC 53774 / DSM 7210 / GS-15)).